The following is a 499-amino-acid chain: Glutelin type-A 2 (499 aa).

A signal peptide spans 1-24 (MASINRPIVFFTVCLFLLCDGSLA). Intrachain disulfides connect C46–C79 and C122–C313. One can recognise a Cupin type-1 1 domain in the interval 51–248 (LQAFEPIRSV…AFGISNQVAR (198 aa)). The tract at residues 280 to 300 (EQGQMQSREHYQEGGYQQSQY) is disordered. A Cupin type-1 2 domain is found at 319–468 (QNIDNPNRAD…AYRISREEAQ (150 aa)).

This sequence belongs to the 11S seed storage protein (globulins) family. Hexamer; each subunit is composed of an acidic and a basic chain derived from a single precursor and linked by a disulfide bond.

Seed storage protein. This chain is Glutelin type-A 2 (GLUA2), found in Oryza sativa subsp. japonica (Rice).